Consider the following 200-residue polypeptide: Putative NAD(P)H nitroreductase Spy0809 (200 aa).

It depends on FMN as a cofactor.

The polypeptide is Putative NAD(P)H nitroreductase Spy0809 (Streptococcus pyogenes serotype M6 (strain ATCC BAA-946 / MGAS10394)).